The chain runs to 969 residues: MVSKLPQEFRRYLRNRNQLQHVLEETQQALELINLENFFPEENVVEELLSPLTLNRITHILANSPAIIILGQDSKAKAIVVNTLISNDILPVCNGLWRWIRLTYGQTNHISLTLDLEYELVENLQANEKPWSTLPIEDLTKSDNEDITYPTVLEVQLNLPILKDGVQIFIAPNNGAVKVLANEFLSILPIFLYALGEQPLTEQNLEELRDLKETYPFNPVLFISSLENISLNGIDPELTESEQHRLQNRLYTNDSTSSKTDDDSIDFDRMNSLGLSWLDQLTNLGFLGMKESVEVDQLSWLGSGQYISDFVGSCRKTDQILYFIRGCLQTYLINASTYLNEVHTASLRKFILSAFDMARIIQITPKRIQYAQHKENELYANLMKIVHEKQQEITGLIQNIIQEMKNDVLLSNNDVYLYQNTMSNNNQRTEWSATVKAAISEVQRVVLGRLCEKVAKQLVNSVNCLRESFIGTLQRCLLSLEKTYERDTCLLASDALKQILSAAYNVELHNSSPFSIYSFLERLNLIFMSSSLQWSSTHTLDVAWRRKVTIEILNSLSATKLSKIILMQFGDKLESSHDSFQAALRSIENYYSGKLERTEEQRIALRKYHAPRLAKLALESTSMIDVVRYGKPHCAEEIGRGQYGIVFACDGWGGKAGPCAIKSVVPSDESHWNDLAMEFYYNRSIPDHKRIVKLRGSIIDHSYGGGFGFGSAVLLISDRLSRDLYCGIRAGLSWLERIQIALDVLEGIRYLHSQGLVHRDVKLKNVLLDIENRAKLTDFGFCITEVMMLGSIVGTPVHMAPELLSGHYDSSVDVYAFGILFWYLCAGHVRLPYTFEQFHNKELLWTSVKKALMIVGIRPERLPSFDDECWRLMEQCWSGEPSKRPLLGAIVPVLESIQQKAKRSKSLQEVSSDKLQESSTDSRNPALALAEPYNQRGTVVSPPPTKRRTMKVVKYHLFLTNLYIQMREL.

The stretch at Gln7 to Asn37 forms a coiled coil. The region spanning Pro632–Leu894 is the Protein kinase domain. Residues Ile638–Val646 and Lys662 each bind ATP. Asp760 acts as the Proton acceptor in catalysis. The segment at Ser904 to Thr945 is disordered.

Belongs to the protein kinase superfamily. Ser/Thr protein kinase family.

Its subcellular location is the cytoplasm. The catalysed reaction is L-seryl-[protein] + ATP = O-phospho-L-seryl-[protein] + ADP + H(+). It catalyses the reaction L-threonyl-[protein] + ATP = O-phospho-L-threonyl-[protein] + ADP + H(+). The enzyme catalyses L-tyrosyl-[protein] + ATP = O-phospho-L-tyrosyl-[protein] + ADP + H(+). This Apis mellifera (Honeybee) protein is Dual serine/threonine and tyrosine protein kinase.